Consider the following 1086-residue polypeptide: Isoleucine--tRNA ligase (1086 aa).

The short motif at 53–63 is the 'HIGH' region element; sequence PFANGLPHYGH. A 'KMSKS' region motif is present at residues 624 to 628; it reads KLSKR. Lysine 627 contributes to the ATP binding site.

This sequence belongs to the class-I aminoacyl-tRNA synthetase family. IleS type 2 subfamily. As to quaternary structure, monomer. Zn(2+) serves as cofactor.

It localises to the cytoplasm. It carries out the reaction tRNA(Ile) + L-isoleucine + ATP = L-isoleucyl-tRNA(Ile) + AMP + diphosphate. In terms of biological role, catalyzes the attachment of isoleucine to tRNA(Ile). As IleRS can inadvertently accommodate and process structurally similar amino acids such as valine, to avoid such errors it has two additional distinct tRNA(Ile)-dependent editing activities. One activity is designated as 'pretransfer' editing and involves the hydrolysis of activated Val-AMP. The other activity is designated 'posttransfer' editing and involves deacylation of mischarged Val-tRNA(Ile). The protein is Isoleucine--tRNA ligase of Rickettsia typhi (strain ATCC VR-144 / Wilmington).